The sequence spans 373 residues: tRNA (guanine(26)-N(2))-dimethyltransferase (373 aa).

Positions 2 to 365 constitute a Trm1 methyltransferase domain; the sequence is KIISEGETKL…AELSDLVVLI (364 aa). Residues arginine 35, arginine 66, aspartate 86, aspartate 113, and alanine 114 each contribute to the S-adenosyl-L-methionine site.

Belongs to the class I-like SAM-binding methyltransferase superfamily. Trm1 family.

The catalysed reaction is guanosine(26) in tRNA + 2 S-adenosyl-L-methionine = N(2)-dimethylguanosine(26) in tRNA + 2 S-adenosyl-L-homocysteine + 2 H(+). Dimethylates a single guanine residue at position 26 of a number of tRNAs using S-adenosyl-L-methionine as donor of the methyl groups. This Methanococcus maripaludis (strain C7 / ATCC BAA-1331) protein is tRNA (guanine(26)-N(2))-dimethyltransferase.